The following is a 122-amino-acid chain: Alkene monooxygenase system, ferredoxin component (122 aa).

In terms of domain architecture, Rieske spans 16–111 (VDVCAVDDLW…LKVEGGRVLI (96 aa)). Cys-55, His-57, Cys-75, and His-78 together coordinate [2Fe-2S] cluster.

It belongs to the bacterial ring-hydroxylating dioxygenase ferredoxin component family. As to quaternary structure, homodimer. The alkene monooxygenase multicomponent enzyme system is composed of an electron transfer component and a monooxygenase component interacting with the effector protein XamoD. The electron transfer component is composed of a ferredoxin reductase (XamoF) and a ferredoxin (XamoC), and the monooxygenase component is formed by a heterohexamer (dimer of heterotrimers) of two alpha subunits (XamoA), two beta subunits (XamoE) and two gamma subunits (XamoB). Requires [2Fe-2S] cluster as cofactor.

It is found in the cytoplasm. In terms of biological role, ferredoxin component of the alkene monooxygenase multicomponent enzyme system which catalyzes the O2- and NADH-dependent epoxidation of short chain (C2 to C6) alkenes to their corresponding epoxides. Functions as an intermediate electron transfer protein. This chain is Alkene monooxygenase system, ferredoxin component, found in Xanthobacter autotrophicus (strain ATCC BAA-1158 / Py2).